A 1454-amino-acid polypeptide reads, in one-letter code: Probable cleavage and polyadenylation specificity factor subunit 1 (1454 aa).

A disordered region spans residues 810 to 843 (EEKEKKAKQTAAQEKEKETEKKKDDAKNEEDQVN). Positions 812-843 (KEKKAKQTAAQEKEKETEKKKDDAKNEEDQVN) are enriched in basic and acidic residues.

Belongs to the CPSF1 family. In terms of assembly, CPSF is a heterotetramer composed of four distinct subunits 160 (cpsf-1), 100 (cpsf-2), 70 (cpsf-3), and 30 kDa (cpsf-4).

Its subcellular location is the nucleus. In terms of biological role, CPSF plays a key role in pre-mRNA 3'-end formation, recognizing the AAUAAA signal sequence and interacting with poly(A)polymerase and other factors to bring about cleavage and poly(A) addition. This subunit is involved in the RNA recognition step of the polyadenylation reaction. The polypeptide is Probable cleavage and polyadenylation specificity factor subunit 1 (Caenorhabditis briggsae).